We begin with the raw amino-acid sequence, 741 residues long: 1,4-alpha-glucan branching enzyme GlgB 2 (741 aa).

The segment at 1–38 (MALRDTSIPEPSGPVPPAPGACATAPPLDPTDRGRLLA) is disordered. D421 functions as the Nucleophile in the catalytic mechanism. E474 serves as the catalytic Proton donor.

Belongs to the glycosyl hydrolase 13 family. GlgB subfamily. In terms of assembly, monomer.

It catalyses the reaction Transfers a segment of a (1-&gt;4)-alpha-D-glucan chain to a primary hydroxy group in a similar glucan chain.. Its pathway is glycan biosynthesis; glycogen biosynthesis. Its function is as follows. Catalyzes the formation of the alpha-1,6-glucosidic linkages in glycogen by scission of a 1,4-alpha-linked oligosaccharide from growing alpha-1,4-glucan chains and the subsequent attachment of the oligosaccharide to the alpha-1,6 position. The protein is 1,4-alpha-glucan branching enzyme GlgB 2 (glgB2) of Streptomyces coelicolor (strain ATCC BAA-471 / A3(2) / M145).